Reading from the N-terminus, the 471-residue chain is Arginine biosynthesis bifunctional protein ArgJ, mitochondrial (471 aa).

T190, K216, T239, E327, N466, and S471 together coordinate substrate. The active-site Nucleophile is T239.

It belongs to the ArgJ family. In terms of assembly, heterodimer of an alpha and a beta chain. The alpha and beta chains are autoproteolytically processed from a single precursor protein within the mitochondrion.

The protein resides in the mitochondrion matrix. It carries out the reaction N(2)-acetyl-L-ornithine + L-glutamate = N-acetyl-L-glutamate + L-ornithine. The catalysed reaction is L-glutamate + acetyl-CoA = N-acetyl-L-glutamate + CoA + H(+). The protein operates within amino-acid biosynthesis; L-arginine biosynthesis; L-ornithine and N-acetyl-L-glutamate from L-glutamate and N(2)-acetyl-L-ornithine (cyclic): step 1/1. It participates in amino-acid biosynthesis; L-arginine biosynthesis; N(2)-acetyl-L-ornithine from L-glutamate: step 1/4. Catalyzes two activities which are involved in the cyclic version of arginine biosynthesis: the synthesis of acetylglutamate from glutamate and acetyl-CoA, and of ornithine by transacetylation between acetylornithine and glutamate. The sequence is that of Arginine biosynthesis bifunctional protein ArgJ, mitochondrial from Coprinopsis cinerea (strain Okayama-7 / 130 / ATCC MYA-4618 / FGSC 9003) (Inky cap fungus).